The chain runs to 359 residues: MSFFNMVKPLIYKTDPELAHDLVDLAMRTARRCPLFFNPLVKANFVDDVMLHQKIWDLEFKNPVGVAAGFDKHATMVYGWPALGFGWGEIGAVTPKPQPGNEKPRAWRHIEYEAVQNAYGFNNEGVEVIKKRLKKIYPFILPIGANIGKNKTTPEERAVEDYKILVNELKDVVDFFVVNVSSPNTPGLRDLLNAEFISSLFGELKNLTDKPILIKFSPDMEDELIINLANYSVLAGADGIIVTNTTVNYDLVNSEIKRGGISGKPLAQRSYEVLRIVAGEVFGKVPIISVGGIDSAEEAYKRIKAGASLLQVYTAIIYKGPGIVGEINRGLIELLKKDGYSHISEAIGVEIPKKLENKA.

FMN-binding positions include 68–72 and Ala-92; that span reads AGFDK. Lys-72 provides a ligand contact to substrate. 117–121 provides a ligand contact to substrate; the sequence is NAYGF. Asn-146 and Asn-179 together coordinate FMN. Asn-179 is a binding site for substrate. The active-site Nucleophile is Ser-182. Asn-184 provides a ligand contact to substrate. FMN-binding residues include Lys-215 and Thr-243. A substrate-binding site is contributed by 244–245; the sequence is NT. Residues Gly-263, Gly-292, and 313–314 each bind FMN; that span reads YT.

The protein belongs to the dihydroorotate dehydrogenase family. Type 2 subfamily. Monomer. Requires FMN as cofactor.

It localises to the cell membrane. It carries out the reaction (S)-dihydroorotate + a quinone = orotate + a quinol. The protein operates within pyrimidine metabolism; UMP biosynthesis via de novo pathway; orotate from (S)-dihydroorotate (quinone route): step 1/1. Functionally, catalyzes the conversion of dihydroorotate to orotate with quinone as electron acceptor. In Nautilia profundicola (strain ATCC BAA-1463 / DSM 18972 / AmH), this protein is Dihydroorotate dehydrogenase (quinone).